We begin with the raw amino-acid sequence, 1877 residues long: Proprotein convertase subtilisin/kexin type 5 (1877 aa).

The N-terminal stretch at 1–34 is a signal peptide; it reads MDWDWGNRCSRPGRRDLLCVLALLAGCLLPVCRT. Positions 35-116 are excised as a propeptide; the sequence is RVYTNHWAVK…QQVVKKRTKR (82 aa). At 117–1768 the chain is on the extracellular side; that stretch reads DYDLSHAQST…EAEFYEHTKT (1652 aa). The Peptidase S8 domain maps to 136-455; it reads MWYMHCSDNT…FGLMDAEAMV (320 aa). Active-site charge relay system residues include Asp173 and His214. Asn227 and Asn383 each carry an N-linked (GlcNAc...) asparagine glycan. Ser388 acts as the Charge relay system in catalysis. The P/Homo B domain occupies 463 to 603; sequence TVPQQHVCVE…SLVLYGTSVQ (141 aa). A Cell attachment site motif is present at residues 521-523; the sequence is RGD. FU repeat units lie at residues 632–682, 685–732, 736–779, 781–826, 834–881, 884–929, 931–981, 984–1030, 1034–1079, 1081–1123, 1127–1168, 1206–1248, 1252–1299, 1301–1345, 1347–1390, 1392–1438, 1442–1487, 1491–1536, 1540–1585, 1589–1636, 1640–1685, and 1691–1738; these read EDYA…GHYH, KKRC…GSYE, KNVC…GQFF, GHDC…SYYL, YKSC…GEYI, QGHC…WKFE, KKQC…GHYP, GHAC…GEFQ, YEEC…KTFG, KWEC…GFHG, LGEC…STWP, TSQN…GTWP, SGSC…GFYA, DGVC…KHVA, EGVC…SFYP, MRQC…GTYK, NDEC…VEYW, SHRC…GYHT, SQQC…GYYG, SGRC…HYYA, AQTC…GEYR, and NFNC…SHSR. Residues 638–1753 are CRM (Cys-rich motif); it reads CDPECSEVGC…CDCQSSTDEC (1116 aa). Asn667 is a glycosylation site (N-linked (GlcNAc...) asparagine). N-linked (GlcNAc...) asparagine glycans are attached at residues Asn754, Asn804, and Asn854. Residues Asn951 and Asn1016 are each glycosylated (N-linked (GlcNAc...) asparagine). N-linked (GlcNAc...) asparagine glycosylation is present at Asn1220. An N-linked (GlcNAc...) asparagine glycan is attached at Asn1317. Asn1523 is a glycosylation site (N-linked (GlcNAc...) asparagine). Residues Asn1711 and Asn1733 are each glycosylated (N-linked (GlcNAc...) asparagine). The helical transmembrane segment at 1769-1789 threads the bilayer; that stretch reads ALLVTSGAMLLLLLGAAAVVW. Residues 1790–1877 lie on the Cytoplasmic side of the membrane; sequence RKSRSRPVAK…EYDDESYSYQ (88 aa). AC stretches follow at residues 1825 to 1844 and 1856 to 1877; these read VIEYRDRDYDEDDEDDIVYM and YGLLDETEDDELEYDDESYSYQ.

It belongs to the peptidase S8 family. PC5A is expressed in most tissues but is most abundant in the intestine and adrenals. PC5B is expressed in the intestine, adrenals and lung but not in the brain.

It is found in the secreted. The protein resides in the endomembrane system. Its function is as follows. Serine endoprotease that processes various proproteins by cleavage at paired basic amino acids, recognizing the RXXX[KR]R consensus motif. Likely functions in the constitutive and regulated secretory pathways. Plays an essential role in pregnancy establishment by proteolytic activation of a number of important factors such as BMP2, CALD1 and alpha-integrins. May be responsible for the maturation of gastrointestinal peptides. May be involved in the cellular proliferation of adrenal cortex via the activation of growth factors. The sequence is that of Proprotein convertase subtilisin/kexin type 5 (Pcsk5) from Mus musculus (Mouse).